The following is a 660-amino-acid chain: DNA mismatch repair protein MutL (660 aa).

Belongs to the DNA mismatch repair MutL/HexB family.

In terms of biological role, this protein is involved in the repair of mismatches in DNA. It is required for dam-dependent methyl-directed DNA mismatch repair. May act as a 'molecular matchmaker', a protein that promotes the formation of a stable complex between two or more DNA-binding proteins in an ATP-dependent manner without itself being part of a final effector complex. This is DNA mismatch repair protein MutL from Streptococcus pyogenes serotype M12 (strain MGAS2096).